Reading from the N-terminus, the 283-residue chain is Thymidylate synthase (283 aa).

Arg22 is a dUMP binding site. The Nucleophile role is filled by Cys160. DUMP is bound by residues 180-183, Asn191, and 221-223; these read RSCD and HIY. Asp183 lines the (6R)-5,10-methylene-5,6,7,8-tetrahydrofolate pocket. Ser282 is a binding site for (6R)-5,10-methylene-5,6,7,8-tetrahydrofolate.

It belongs to the thymidylate synthase family. Bacterial-type ThyA subfamily. In terms of assembly, homodimer.

The protein localises to the cytoplasm. It carries out the reaction dUMP + (6R)-5,10-methylene-5,6,7,8-tetrahydrofolate = 7,8-dihydrofolate + dTMP. Its pathway is pyrimidine metabolism; dTTP biosynthesis. In terms of biological role, catalyzes the reductive methylation of 2'-deoxyuridine-5'-monophosphate (dUMP) to 2'-deoxythymidine-5'-monophosphate (dTMP) while utilizing 5,10-methylenetetrahydrofolate (mTHF) as the methyl donor and reductant in the reaction, yielding dihydrofolate (DHF) as a by-product. This enzymatic reaction provides an intracellular de novo source of dTMP, an essential precursor for DNA biosynthesis. The protein is Thymidylate synthase of Psychromonas ingrahamii (strain DSM 17664 / CCUG 51855 / 37).